The following is a 362-amino-acid chain: Probable endopolygalacturonase II (362 aa).

A signal peptide spans 1 to 20 (MHSFASLLAYGLAAGATLAS). The propeptide occupies 21–27 (ASPIEAR). The cysteines at positions 30 and 45 are disulfide-linked. One copy of the PbH1 1 repeat lies at 156–186 (SDDITLTDITINNADGDSLGGHNTDAFDVGN). D201 acts as the Proton donor in catalysis. C203 and C219 are oxidised to a cystine. PbH1 repeat units follow at residues 209-229 (GENI…SIGS), 238-259 (VKNV…RIKT), 267-289 (VSEI…VIQQ), and 301-322 (TNGV…DSKA). Residue H223 is part of the active site. The N-linked (GlcNAc...) asparagine glycan is linked to N240. Intrachain disulfides connect C329-C334 and C353-C362.

This sequence belongs to the glycosyl hydrolase 28 family.

The protein resides in the secreted. It carries out the reaction (1,4-alpha-D-galacturonosyl)n+m + H2O = (1,4-alpha-D-galacturonosyl)n + (1,4-alpha-D-galacturonosyl)m.. In terms of biological role, involved in maceration and soft-rotting of plant tissue. Hydrolyzes the 1,4-alpha glycosidic bonds of de-esterified pectate in the smooth region of the plant cell wall. The sequence is that of Probable endopolygalacturonase II (pgaII) from Aspergillus kawachii (strain NBRC 4308) (White koji mold).